A 397-amino-acid polypeptide reads, in one-letter code: Translocase of chloroplast 34 homolog, chloroplastic (397 aa).

Residues 1 to 72 (MAQPPRPAEE…SQPWAGLNRL (72 aa)) are disordered. Acidic residues-rich tracts occupy residues 10–32 (EYDDDVQEDEDELKEGELDDDES) and 44–63 (AGDEEAEDDEQDEEDGDEDS). The 232-residue stretch at 90–321 (RKQLTVLLLG…YKYHPRLSSK (232 aa)) folds into the AIG1-type G domain. The tract at residues 99–106 (GKSSVGKS) is G1. GTP-binding positions include 102–107 (SVGKSS) and 121–126 (QAFKLQ). S106 contributes to the Mg(2+) binding site. Residues 121–124 (QAFK) are homodimerization. The segment at 126 to 130 (QADTD) is G2. A G3 region spans residues 155–158 (DTCG). The interval 193–198 (RLDLYR) is homodimerization. A G4 region spans residues 227–230 (THAN). Residues H228 and 271 to 272 (EN) contribute to the GTP site. Positions 271 to 273 (ENS) are G5. The helical transmembrane segment at 329 to 349 (LLPVAIAAEVLFYRRFLHPRL) threads the bilayer. The short motif at 350–358 (DDNQRRVER) is the AKR2A-binding sequence (ABS) required for chloroplast outer envelope membrane targeting element.

It belongs to the TRAFAC class TrmE-Era-EngA-EngB-Septin-like GTPase superfamily. AIG1/Toc34/Toc159-like paraseptin GTPase family. TOC34 subfamily. Homodimer, heterodimer with other TOC proteins, and monomer. Part of the TOC core complex that includes 1 protein for the specific recognition of transit peptides surrounded by a ring composed of four proteins forming translocation channels, and four to five GTP-binding proteins providing energy. This core complex can interact with components of the TIC complex to form a larger import complex. Interacts with ARSA1. The cofactor is Mg(2+).

The protein localises to the plastid. Its subcellular location is the chloroplast outer membrane. In terms of biological role, GTPase involved in protein precursor import into chloroplasts. Seems to recognize chloroplast-destined precursor proteins and regulate their presentation to the translocation channel through GTP hydrolysis. Functions as an essential component of the outer chloroplast membrane translocon (TOC) complex, which, in turn, catalyzes the import of nucleus-encoded precursor polypeptides from the cytoplasm to the chloroplast. This chain is Translocase of chloroplast 34 homolog, chloroplastic, found in Chlamydomonas reinhardtii (Chlamydomonas smithii).